A 126-amino-acid polypeptide reads, in one-letter code: Large ribosomal subunit protein bL17 (126 aa).

It belongs to the bacterial ribosomal protein bL17 family. As to quaternary structure, part of the 50S ribosomal subunit. Contacts protein L32.

This is Large ribosomal subunit protein bL17 from Lactococcus lactis subsp. lactis (strain IL1403) (Streptococcus lactis).